A 570-amino-acid polypeptide reads, in one-letter code: Proline--tRNA ligase (570 aa).

The protein belongs to the class-II aminoacyl-tRNA synthetase family. ProS type 1 subfamily. As to quaternary structure, homodimer.

The protein localises to the cytoplasm. The enzyme catalyses tRNA(Pro) + L-proline + ATP = L-prolyl-tRNA(Pro) + AMP + diphosphate. Catalyzes the attachment of proline to tRNA(Pro) in a two-step reaction: proline is first activated by ATP to form Pro-AMP and then transferred to the acceptor end of tRNA(Pro). As ProRS can inadvertently accommodate and process non-cognate amino acids such as alanine and cysteine, to avoid such errors it has two additional distinct editing activities against alanine. One activity is designated as 'pretransfer' editing and involves the tRNA(Pro)-independent hydrolysis of activated Ala-AMP. The other activity is designated 'posttransfer' editing and involves deacylation of mischarged Ala-tRNA(Pro). The misacylated Cys-tRNA(Pro) is not edited by ProRS. The sequence is that of Proline--tRNA ligase from Thermoanaerobacter sp. (strain X514).